The chain runs to 292 residues: Ribosomal protein L11 methyltransferase (292 aa).

S-adenosyl-L-methionine contacts are provided by Thr145, Gly166, Asp188, and Asn229.

The protein belongs to the methyltransferase superfamily. PrmA family.

It localises to the cytoplasm. It carries out the reaction L-lysyl-[protein] + 3 S-adenosyl-L-methionine = N(6),N(6),N(6)-trimethyl-L-lysyl-[protein] + 3 S-adenosyl-L-homocysteine + 3 H(+). Methylates ribosomal protein L11. In Nitrosococcus oceani (strain ATCC 19707 / BCRC 17464 / JCM 30415 / NCIMB 11848 / C-107), this protein is Ribosomal protein L11 methyltransferase.